A 630-amino-acid chain; its full sequence is tRNA uridine 5-carboxymethylaminomethyl modification enzyme MnmG (630 aa).

Residue 13–18 (GGGHAG) coordinates FAD. 273–287 (GPRYCPSIEDKIHRF) provides a ligand contact to NAD(+).

Belongs to the MnmG family. As to quaternary structure, homodimer. Heterotetramer of two MnmE and two MnmG subunits. FAD serves as cofactor.

Its subcellular location is the cytoplasm. NAD-binding protein involved in the addition of a carboxymethylaminomethyl (cmnm) group at the wobble position (U34) of certain tRNAs, forming tRNA-cmnm(5)s(2)U34. The sequence is that of tRNA uridine 5-carboxymethylaminomethyl modification enzyme MnmG from Pseudomonas putida (Arthrobacter siderocapsulatus).